The chain runs to 760 residues: DNA replication licensing factor mcm7 (760 aa).

Residues 353 to 559 form the MCM domain; it reads VYEKLAKSIA…ETDEHLAQHV (207 aa). Residues Tyr-366, Gly-406, Ala-408, Lys-409, Ser-410, Asn-511, Arg-536, and Arg-630 each contribute to the ATP site. The Arginine finger signature appears at 535 to 538; sequence SRFD.

Belongs to the MCM family. In terms of assembly, component of the mcm2-7 complex. The complex forms a toroidal hexameric ring with the proposed subunit order mcm2-mcm6-mcm4-mcm7-mcm3-mcm5. The heterodimers of mcm4/mcm6 and mcm3/mcm5 interact with mcm2 and mcm7. Interacts with sld3 and mcm10.

The protein resides in the nucleus. It catalyses the reaction ATP + H2O = ADP + phosphate + H(+). Acts as a component of the MCM2-7 complex (MCM complex) which is the replicative helicase essential for 'once per cell cycle' DNA replication initiation and elongation in eukaryotic cells. Core component of CDC45-MCM-GINS (CMG) helicase, the molecular machine that unwinds template DNA during replication, and around which the replisome is built. The active ATPase sites in the MCM2-7 ring are formed through the interaction surfaces of two neighboring subunits such that a critical structure of a conserved arginine finger motif is provided in trans relative to the ATP-binding site of the Walker A box of the adjacent subunit. The six ATPase active sites, however, are likely to contribute differentially to the complex helicase activity. Required for the progression of S phase. This chain is DNA replication licensing factor mcm7 (mcm7), found in Schizosaccharomyces pombe (strain 972 / ATCC 24843) (Fission yeast).